A 158-amino-acid chain; its full sequence is 3-hydroxyacyl-[acyl-carrier-protein] dehydratase FabZ (158 aa).

The active site involves His-60.

The protein belongs to the thioester dehydratase family. FabZ subfamily.

The protein localises to the cytoplasm. It carries out the reaction a (3R)-hydroxyacyl-[ACP] = a (2E)-enoyl-[ACP] + H2O. Functionally, involved in unsaturated fatty acids biosynthesis. Catalyzes the dehydration of short chain beta-hydroxyacyl-ACPs and long chain saturated and unsaturated beta-hydroxyacyl-ACPs. In Zymomonas mobilis subsp. mobilis (strain ATCC 31821 / ZM4 / CP4), this protein is 3-hydroxyacyl-[acyl-carrier-protein] dehydratase FabZ.